We begin with the raw amino-acid sequence, 156 residues long: Small ribosomal subunit protein uS7 (156 aa).

This sequence belongs to the universal ribosomal protein uS7 family. In terms of assembly, part of the 30S ribosomal subunit. Contacts proteins S9 and S11.

One of the primary rRNA binding proteins, it binds directly to 16S rRNA where it nucleates assembly of the head domain of the 30S subunit. Is located at the subunit interface close to the decoding center, probably blocks exit of the E-site tRNA. The protein is Small ribosomal subunit protein uS7 of Crocosphaera subtropica (strain ATCC 51142 / BH68) (Cyanothece sp. (strain ATCC 51142)).